Consider the following 107-residue polypeptide: Ferredoxin 1 (107 aa).

4Fe-4S ferredoxin-type domains follow at residues T2–P30 and N31–E60. Residues C9 and C17 each contribute to the [3Fe-4S] cluster site. Positions 21, 40, 43, and 46 each coordinate [4Fe-4S] cluster. A [3Fe-4S] cluster-binding site is contributed by C50.

Requires [4Fe-4S] cluster as cofactor. [3Fe-4S] cluster is required as a cofactor.

Functionally, ferredoxins are iron-sulfur proteins that transfer electrons in a wide variety of metabolic reactions. In Pseudomonas aeruginosa (strain ATCC 15692 / DSM 22644 / CIP 104116 / JCM 14847 / LMG 12228 / 1C / PRS 101 / PAO1), this protein is Ferredoxin 1 (fdxA).